The chain runs to 249 residues: Serine 3-dehydrogenase (249 aa).

6-30 (LITGATSGFGQATAQRFVKEGWKVI) contacts NADP(+). S135 is a binding site for substrate. Y148 functions as the Proton acceptor in the catalytic mechanism.

This sequence belongs to the short-chain dehydrogenases/reductases (SDR) family. As to quaternary structure, homotetramer.

The enzyme catalyses L-serine + NADP(+) = aminoacetaldehyde + CO2 + NADPH. Its function is as follows. Catalyzes the oxidation of the hydroxyl group of serine to form 2-aminomalonate semialdehyde which is spontaneously converted into 2-aminoacetaldehyde and CO(2). Also acts on D-serine, L-glycerate, D-glycerate and 2-methyl-DL-serine. Does not act on O-methyl-DL-serine and L-threonine. This Rhizobium radiobacter (Agrobacterium tumefaciens) protein is Serine 3-dehydrogenase (sdh).